Here is a 663-residue protein sequence, read N- to C-terminus: (R)-specific secondary-alkylsulfatase (663 aa).

Positions 1–28 (MSRFIRASQRRTLLATLIAATLAQPLLA) are cleaved as a signal peptide. Zn(2+)-binding residues include H179, H181, D183, and H184. Position 232 (Q232) interacts with sulfate. 2 residues coordinate Zn(2+): E291 and D310. Sulfate contacts are provided by residues 318–323 (NLLTPR) and R328. H355 is a binding site for Zn(2+). Y417 provides a ligand contact to sulfate.

It belongs to the metallo-beta-lactamase superfamily. Type III sulfatase family. As to quaternary structure, homodimer.

It carries out the reaction an (R)-secondary-alkyl sulfate + H2O = an (S)-secondary-alcohol + sulfate.. Its function is as follows. Alkylsulfatase that catalyzes the enantioselective hydrolysis of secondary-alkylsulfates with strict inversion of configuration, leading to the formation of homochiral (S)-configurated alcohols and nonreacted sulfate esters. The substrate spectrum includes a range of linear, branched or cyclic sec-alkylsulfates. Can use sec-alkylsulfate esters bearing aromatic, olefinic and acetylenic moieties. Acts by cleaving the C-O bond, resulting in inversion at the carbon. This chain is (R)-specific secondary-alkylsulfatase, found in Pseudomonas sp.